We begin with the raw amino-acid sequence, 537 residues long: Putative cysteine ligase BshC (537 aa).

A coiled-coil region spans residues 422 to 450 (IEKVEGMIEQQRRLYQDLLDEVAGNQNNI).

It belongs to the BshC family.

Its function is as follows. Involved in bacillithiol (BSH) biosynthesis. May catalyze the last step of the pathway, the addition of cysteine to glucosamine malate (GlcN-Mal) to generate BSH. This is Putative cysteine ligase BshC from Staphylococcus aureus (strain MRSA252).